The sequence spans 403 residues: Indoleamine 2,3-dioxygenase 1 (403 aa).

Histidine 346 contributes to the heme b binding site. The interval 360–381 is disordered; sequence QQPKENKTSEDPSKLEAKGTGG. A compositionally biased stretch (basic and acidic residues) spans 363-376; the sequence is KENKTSEDPSKLEA.

This sequence belongs to the indoleamine 2,3-dioxygenase family. Monomer. The cofactor is heme b. As to expression, expressed in mature dendritic cells located in lymphoid organs (including lymph nodes, spleen, tonsils, Peyers's patches, the gut lamina propria, and the thymic medulla), in some epithelial cells of the female genital tract, as well as in endothelial cells of term placenta and in lung parenchyma. Weakly or not expressed in most normal tissues, but mostly inducible in most tissues. Expressed in more than 50% of tumors, either by tumoral, stromal, or endothelial cells (expression in tumor is associated with a worse clinical outcome). Not overexpressed in tumor-draining lymph nodes.

Its subcellular location is the cytoplasm. The protein resides in the cytosol. The enzyme catalyses D-tryptophan + O2 = N-formyl-D-kynurenine. The catalysed reaction is L-tryptophan + O2 = N-formyl-L-kynurenine. The protein operates within amino-acid degradation; L-tryptophan degradation via kynurenine pathway; L-kynurenine from L-tryptophan: step 1/2. Its activity is regulated as follows. Activity is inhibited by and MTH-trp (methylthiohydantoin-DL-tryptophan), modestly inhibited by L-1MT (1-methyl-L-tryptophan) but not D-1MT (1-methyl-D-tryptophan). Catalyzes the first and rate limiting step of the catabolism of the essential amino acid tryptophan along the kynurenine pathway. Involved in the peripheral immune tolerance, contributing to maintain homeostasis by preventing autoimmunity or immunopathology that would result from uncontrolled and overreacting immune responses. Tryptophan shortage inhibits T lymphocytes division and accumulation of tryptophan catabolites induces T-cell apoptosis and differentiation of regulatory T-cells. Acts as a suppressor of anti-tumor immunity. Limits the growth of intracellular pathogens by depriving tryptophan. Protects the fetus from maternal immune rejection. This is Indoleamine 2,3-dioxygenase 1 from Homo sapiens (Human).